The following is a 92-amino-acid chain: Non-specific lipid-transfer protein A (92 aa).

Cystine bridges form between Cys3–Cys51, Cys13–Cys28, Cys29–Cys74, and Cys49–Cys88.

Belongs to the plant LTP family.

In terms of biological role, plant non-specific lipid-transfer proteins transfer phospholipids as well as galactolipids across membranes. May play a role in wax or cutin deposition in the cell walls of expanding epidermal cells and certain secretory tissues. This Ricinus communis (Castor bean) protein is Non-specific lipid-transfer protein A.